Consider the following 1219-residue polypeptide: Disease resistance-like protein DSC1 (1219 aa).

Residues 9–176 form the TIR domain; it reads AEFDVFLSFR…EIAVDTFKKL (168 aa). The active site involves Glu-83. In terms of domain architecture, NB-ARC spans 197 to 446; the sequence is LEKLLSWEDL…DIACFFRSEN (250 aa). An ATP-binding site is contributed by 216 to 222; sequence GMVGIGK. 11 LRR repeats span residues 468 to 493, 538 to 563, 597 to 619, 620 to 642, 665 to 689, 690 to 713, 733 to 757, 759 to 780, 804 to 827, 854 to 877, and 878 to 899; these read LVDK…MAKE, TDKI…AFQG, PNEL…DFDP, KNLV…EKDV, AHNL…INCL, EKLI…IKTQ, SENV…QTFR, LALL…LYKL, MESL…MHLS, CSRL…IGGL, and SSLQ…SFNQ.

The protein belongs to the disease resistance NB-LRR family. As to quaternary structure, interacts with CAMTA3 and DSC2.

The catalysed reaction is NAD(+) + H2O = ADP-D-ribose + nicotinamide + H(+). Its function is as follows. TIR-NB-LRR receptor-like protein involved in plant defense. Acts as a trigger of hypersensitive response (HR). Functions as a guard of CAMTA3, a negative regulator of immunity, during pathogen infection. This is Disease resistance-like protein DSC1 from Arabidopsis thaliana (Mouse-ear cress).